A 943-amino-acid polypeptide reads, in one-letter code: 2-oxoglutarate dehydrogenase E1 component (943 aa).

Belongs to the alpha-ketoglutarate dehydrogenase family. In terms of assembly, homodimer. Part of the 2-oxoglutarate dehydrogenase (OGDH) complex composed of E1 (2-oxoglutarate dehydrogenase), E2 (dihydrolipoamide succinyltransferase) and E3 (dihydrolipoamide dehydrogenase); the complex contains multiple copies of the three enzymatic components (E1, E2 and E3). Thiamine diphosphate is required as a cofactor.

The catalysed reaction is N(6)-[(R)-lipoyl]-L-lysyl-[protein] + 2-oxoglutarate + H(+) = N(6)-[(R)-S(8)-succinyldihydrolipoyl]-L-lysyl-[protein] + CO2. Functionally, E1 component of the 2-oxoglutarate dehydrogenase (OGDH) complex which catalyzes the decarboxylation of 2-oxoglutarate, the first step in the conversion of 2-oxoglutarate to succinyl-CoA and CO(2). This Shouchella clausii (strain KSM-K16) (Alkalihalobacillus clausii) protein is 2-oxoglutarate dehydrogenase E1 component.